Consider the following 386-residue polypeptide: Putative aminotransferase YugH (386 aa).

Lys-234 carries the post-translational modification N6-(pyridoxal phosphate)lysine.

Belongs to the class-I pyridoxal-phosphate-dependent aminotransferase family. Requires pyridoxal 5'-phosphate as cofactor.

Its subcellular location is the cytoplasm. This is Putative aminotransferase YugH (yugH) from Bacillus subtilis (strain 168).